A 147-amino-acid polypeptide reads, in one-letter code: uncharacterized protein (147 aa).

Positions 44–147 (LVGYIDKEIH…LKSIKERLSI (104 aa)) constitute an HTH LytTR-type domain.

The protein resides in the cytoplasm. This is an uncharacterized protein from Staphylococcus aureus (strain bovine RF122 / ET3-1).